A 298-amino-acid chain; its full sequence is Tyrosine recombinase XerC (298 aa).

The Core-binding (CB) domain maps to 2–88 (TDLHTDVERY…ALRSFFDWLV (87 aa)). The Tyr recombinase domain occupies 109–288 (HLPKNIDVDD…DFQHLASVYD (180 aa)). Catalysis depends on residues R148, K172, H240, R243, and H266. Y275 (O-(3'-phospho-DNA)-tyrosine intermediate) is an active-site residue.

It belongs to the 'phage' integrase family. XerC subfamily. As to quaternary structure, forms a cyclic heterotetrameric complex composed of two molecules of XerC and two molecules of XerD, in which XerC interacts with XerD via its C-terminal region, XerD interacts with XerC via its C-terminal region and so on.

Its subcellular location is the cytoplasm. Its activity is regulated as follows. FtsK may regulate the catalytic switch between XerC and XerD in the heterotetrameric complex during the two steps of the recombination process. Functionally, site-specific tyrosine recombinase, which acts by catalyzing the cutting and rejoining of the recombining DNA molecules. Binds cooperatively to specific DNA consensus sequences that are separated from XerD binding sites by a short central region, forming the heterotetrameric XerC-XerD complex that recombines DNA substrates. The complex is essential to convert dimers of the bacterial chromosome into monomers to permit their segregation at cell division. It also contributes to the segregational stability of plasmids. In the complex XerC specifically exchanges the top DNA strands. In Escherichia coli O6:K15:H31 (strain 536 / UPEC), this protein is Tyrosine recombinase XerC.